The primary structure comprises 925 residues: Isoleucine--tRNA ligase (925 aa).

The 'HIGH' region signature appears at 57-67 (PYANGDIHIGH). E553 serves as a coordination point for L-isoleucyl-5'-AMP. The short motif at 594–598 (KMSKS) is the 'KMSKS' region element. K597 contacts ATP. C889, C892, C909, and C912 together coordinate Zn(2+).

The protein belongs to the class-I aminoacyl-tRNA synthetase family. IleS type 1 subfamily. In terms of assembly, monomer. Zn(2+) serves as cofactor.

Its subcellular location is the cytoplasm. It catalyses the reaction tRNA(Ile) + L-isoleucine + ATP = L-isoleucyl-tRNA(Ile) + AMP + diphosphate. In terms of biological role, catalyzes the attachment of isoleucine to tRNA(Ile). As IleRS can inadvertently accommodate and process structurally similar amino acids such as valine, to avoid such errors it has two additional distinct tRNA(Ile)-dependent editing activities. One activity is designated as 'pretransfer' editing and involves the hydrolysis of activated Val-AMP. The other activity is designated 'posttransfer' editing and involves deacylation of mischarged Val-tRNA(Ile). In Brevibacillus brevis (strain 47 / JCM 6285 / NBRC 100599), this protein is Isoleucine--tRNA ligase.